The chain runs to 802 residues: Valine--tRNA ligase (802 aa).

A 'HIGH' region motif is present at residues 45–55; the sequence is PTISGQLHIGH. The short motif at 524 to 528 is the 'KMSKS' region element; sequence KMSKS. Lysine 527 contributes to the ATP binding site.

Belongs to the class-I aminoacyl-tRNA synthetase family. ValS type 2 subfamily. Monomer.

It localises to the cytoplasm. The catalysed reaction is tRNA(Val) + L-valine + ATP = L-valyl-tRNA(Val) + AMP + diphosphate. Catalyzes the attachment of valine to tRNA(Val). As ValRS can inadvertently accommodate and process structurally similar amino acids such as threonine, to avoid such errors, it has a 'posttransfer' editing activity that hydrolyzes mischarged Thr-tRNA(Val) in a tRNA-dependent manner. This Ehrlichia canis (strain Jake) protein is Valine--tRNA ligase.